The following is a 300-amino-acid chain: tRNA pseudouridine synthase B (300 aa).

The active-site Nucleophile is aspartate 44.

The protein belongs to the pseudouridine synthase TruB family. Type 1 subfamily.

The enzyme catalyses uridine(55) in tRNA = pseudouridine(55) in tRNA. Functionally, responsible for synthesis of pseudouridine from uracil-55 in the psi GC loop of transfer RNAs. The chain is tRNA pseudouridine synthase B from Corynebacterium diphtheriae (strain ATCC 700971 / NCTC 13129 / Biotype gravis).